We begin with the raw amino-acid sequence, 1400 residues long: MNQEIMNLFNPTTPAQVFDQIRISIASPEKILSWSYGEIKKPETINYRTFKPERDGLFCARIFGPIKDYECLCGKYKRMKYKGIICEKCSVEVTLSRVRRERMGHIELAAPVAHIWFLKSLPSRIGQLLDMTLKDLERILYFEYYVVLEPGLTDLKERQLLSEEEYLRAQDQYGQDSFTAMIGAEAIRELLKGLELEKIDAQLRVEMAETDSDIKHKKLAKRLKIVEAFRFSGNKPEWMILTVVPVIPPDLRPLVPLDGGRFATSDLNDLYRRVINRNNRLKRLMELRAPDIIIRNEKRMLQEAVDALFDNGRRGRVITGANKRPLKSLADMLKGKQGRFRQNLLGKRVDYSGRSVIVVGPELKLHQCGLPKKMALELFKPFIYSRLDAKGLSTTVKQAKKLVEKERPEVWDILDEVIREHPVLLNRAPTLHRLGIQAFEPVLIEGKAIQLHPLVCAAFNADFDGDQMAVHVPLSLEAQLEARVLMMSTNNILHPANGQPIIVPSQDIVLGLYYLSILREGLPGEGKVFGDLAELEHALFSKVIHLHTKIKYRWDSLDDEGKPYQRLIETTAGRILLGQVLPKSVKLPFEVINKLMTKREISSVIDQVYRHCGQKETVIFCDRIMALGFFNAFKAGISFGKDDMVVPASKWKIVDTTRTLAKDFEQQYNDGLITHGEKYNKVVDAWSKATEEIAKEMMKEISAVRKNASGAETQVNSIYMMAHSGARGSPAQMRQLAGMRGLMAKPSGEIIETPIISNFKEGLSVLEYFNSTHGARKGLADTALKTANSGYLTRRLVDVAQDCIITQDDCGTSLGIKMRAIIDAGTVVASLGSRILGRTAGEDVRDPQTNEVIVKKGQLMEERDVEAIHQAGVQEVKIRSALTCELVNGICGKCYGRDLARGTPVNHGEAVGVIAAQSIGEPGTQLTMRTFHIGGAAQINEQSVIESNFEGKVVIKNKAIARNGENHSVAMVRNMVVAIVDPDGTERATHRIQYGARMHVDEGDTVKRGQRIAEWDPYSRPVLTEVEGTIDFEDLVEDQSISETLDESTGIAKRIVIDWRSTRGGADLRPAIVVKGKDGKVLKLARGGDARYMLSVDAILSVDVGAKVKPGDILARISTESAKTRDITGGLPRVAELFEARKPKDAAIIAEIAGTIRFGRDYKNKRRISIEPMDSEEEAREYLIPKGKHIHLQDGDIVEKGDFIVEGNPAPHDILAIKGIEELAAYLVNEIQEVYRLQGVLINDKHIEVIVRQMLQKVEITDQGETDMISGEQIDKIEFDQLNAKARDEGKKIATGTPVLLGITKASLQTRSFFSAASFQETTRVLTEAAVNGKVDPLEGLKENVIVGRLIPAGTGASMAKLREVAMKRDRMILDEREKQATIVPPAAPEAEPLALPPVE.

Zn(2+) is bound by residues C71, C73, C86, and C89. Residues D462, D464, and D466 each contribute to the Mg(2+) site. Zn(2+) contacts are provided by C810, C884, C891, and C894. The disordered stretch occupies residues 1377-1400; sequence REKQATIVPPAAPEAEPLALPPVE.

The protein belongs to the RNA polymerase beta' chain family. In terms of assembly, the RNAP catalytic core consists of 2 alpha, 1 beta, 1 beta' and 1 omega subunit. When a sigma factor is associated with the core the holoenzyme is formed, which can initiate transcription. It depends on Mg(2+) as a cofactor. The cofactor is Zn(2+).

It catalyses the reaction RNA(n) + a ribonucleoside 5'-triphosphate = RNA(n+1) + diphosphate. DNA-dependent RNA polymerase catalyzes the transcription of DNA into RNA using the four ribonucleoside triphosphates as substrates. The polypeptide is DNA-directed RNA polymerase subunit beta' (Rhodopseudomonas palustris (strain HaA2)).